A 256-amino-acid chain; its full sequence is Imidazole glycerol phosphate synthase subunit HisF (256 aa).

Active-site residues include Asp12 and Asp131.

This sequence belongs to the HisA/HisF family. Heterodimer of HisH and HisF.

It localises to the cytoplasm. It catalyses the reaction 5-[(5-phospho-1-deoxy-D-ribulos-1-ylimino)methylamino]-1-(5-phospho-beta-D-ribosyl)imidazole-4-carboxamide + L-glutamine = D-erythro-1-(imidazol-4-yl)glycerol 3-phosphate + 5-amino-1-(5-phospho-beta-D-ribosyl)imidazole-4-carboxamide + L-glutamate + H(+). Its pathway is amino-acid biosynthesis; L-histidine biosynthesis; L-histidine from 5-phospho-alpha-D-ribose 1-diphosphate: step 5/9. Functionally, IGPS catalyzes the conversion of PRFAR and glutamine to IGP, AICAR and glutamate. The HisF subunit catalyzes the cyclization activity that produces IGP and AICAR from PRFAR using the ammonia provided by the HisH subunit. This Pseudomonas syringae pv. tomato (strain ATCC BAA-871 / DC3000) protein is Imidazole glycerol phosphate synthase subunit HisF.